We begin with the raw amino-acid sequence, 90 residues long: Small ribosomal subunit protein uS17 (90 aa).

It belongs to the universal ribosomal protein uS17 family. In terms of assembly, part of the 30S ribosomal subunit.

Functionally, one of the primary rRNA binding proteins, it binds specifically to the 5'-end of 16S ribosomal RNA. In Cutibacterium acnes (strain DSM 16379 / KPA171202) (Propionibacterium acnes), this protein is Small ribosomal subunit protein uS17.